The primary structure comprises 285 residues: Mitochondrial substrate carrier family protein S (285 aa).

Residues 1–9 (MSTERGLKD) are Mitochondrial intermembrane-facing. Solcar repeat units follow at residues 4-87 (ERGL…MKVL), 96-183 (LTVG…CKRY), and 197-283 (LNLP…VIKL). The helical transmembrane segment at 10-30 (SIAGTVAGAACLFTGHPFDTI) threads the bilayer. Residues 31–61 (RVRLQTSNTPIGIMECFRNTIKYEGFSGLYK) are Mitochondrial matrix-facing. A helical transmembrane segment spans residues 62–82 (GVTSPLFGMMFETAVLFAGYG). Residues 83-101 (QMKVLLQKDENTPLTVGQC) lie on the Mitochondrial intermembrane side of the membrane. A helical transmembrane segment spans residues 102-122 (AIAGGFAGVGASVVLTPVELV). Topologically, residues 123-150 (KCRLQVQTTGPQKYKGSLDCLVQILKEG) are mitochondrial matrix. A helical membrane pass occupies residues 151–172 (GIRGAYRGFTPTIAREFVGNMA). Topologically, residues 173–199 (FFSTYETCKRYFKNKENKPNDDDELNL) are mitochondrial intermembrane. A helical transmembrane segment spans residues 200-220 (PALIISGGLGGMAYWTVLYPV). Over 221 to 258 (DVAKSKIQISEGAGPSPSIVKVLKEIYSKEGVKGLFRG) the chain is Mitochondrial matrix. A helical transmembrane segment spans residues 259 to 277 (YTPTIIRSFPANAAMFSVY). Residues 278–285 (ELVIKLLG) lie on the Mitochondrial intermembrane side of the membrane.

Belongs to the mitochondrial carrier (TC 2.A.29) family.

The protein localises to the mitochondrion inner membrane. Functionally, mitochondrial solute carriers shuttle metabolites, nucleotides, and cofactors through the mitochondrial inner membrane. Mediates the transport of acylcarnitines of different length across the mitochondrial inner membrane from the cytosol to the mitochondrial matrix for their oxidation by the mitochondrial fatty acid-oxidation pathway. This is Mitochondrial substrate carrier family protein S (mcfS) from Dictyostelium discoideum (Social amoeba).